Here is a 127-residue protein sequence, read N- to C-terminus: Fluoride-specific ion channel FluC (127 aa).

4 consecutive transmembrane segments (helical) span residues 4–24 (LLLA…FLSM), 35–55 (LGTL…LAWF), 71–91 (TGFC…VFLL), and 103–123 (IAVN…LFSA). 2 residues coordinate Na(+): G75 and T78.

It belongs to the fluoride channel Fluc/FEX (TC 1.A.43) family.

It is found in the cell inner membrane. It carries out the reaction fluoride(in) = fluoride(out). Na(+) is not transported, but it plays an essential structural role and its presence is essential for fluoride channel function. Fluoride-specific ion channel. Important for reducing fluoride concentration in the cell, thus reducing its toxicity. The chain is Fluoride-specific ion channel FluC from Enterobacter sp. (strain 638).